We begin with the raw amino-acid sequence, 208 residues long: Thymidylate kinase (208 aa).

9 to 16 serves as a coordination point for ATP; it reads GGEGCGKS.

Belongs to the thymidylate kinase family.

The enzyme catalyses dTMP + ATP = dTDP + ADP. In terms of biological role, phosphorylation of dTMP to form dTDP in both de novo and salvage pathways of dTTP synthesis. The protein is Thymidylate kinase of Dehalococcoides mccartyi (strain CBDB1).